The primary structure comprises 353 residues: Holliday junction branch migration complex subunit RuvB (353 aa).

The segment at 1–182 (MPERLITPKG…FGIVQRLEFY (182 aa)) is large ATPase domain (RuvB-L). Residues isoleucine 21, arginine 22, glycine 63, lysine 66, threonine 67, threonine 68, 129–131 (EDF), arginine 172, tyrosine 182, and arginine 219 each bind ATP. Residue threonine 67 participates in Mg(2+) binding. The small ATPAse domain (RuvB-S) stretch occupies residues 183–253 (NVQDLTRIVQ…VADRALDLLD (71 aa)). The tract at residues 256–353 (VQGFDAQDRR…QEEGGGEGKL (98 aa)) is head domain (RuvB-H). DNA is bound by residues arginine 292, arginine 311, and arginine 316.

The protein belongs to the RuvB family. As to quaternary structure, homohexamer. Forms an RuvA(8)-RuvB(12)-Holliday junction (HJ) complex. HJ DNA is sandwiched between 2 RuvA tetramers; dsDNA enters through RuvA and exits via RuvB. An RuvB hexamer assembles on each DNA strand where it exits the tetramer. Each RuvB hexamer is contacted by two RuvA subunits (via domain III) on 2 adjacent RuvB subunits; this complex drives branch migration. In the full resolvosome a probable DNA-RuvA(4)-RuvB(12)-RuvC(2) complex forms which resolves the HJ.

The protein resides in the cytoplasm. The catalysed reaction is ATP + H2O = ADP + phosphate + H(+). Functionally, the RuvA-RuvB-RuvC complex processes Holliday junction (HJ) DNA during genetic recombination and DNA repair, while the RuvA-RuvB complex plays an important role in the rescue of blocked DNA replication forks via replication fork reversal (RFR). RuvA specifically binds to HJ cruciform DNA, conferring on it an open structure. The RuvB hexamer acts as an ATP-dependent pump, pulling dsDNA into and through the RuvAB complex. RuvB forms 2 homohexamers on either side of HJ DNA bound by 1 or 2 RuvA tetramers; 4 subunits per hexamer contact DNA at a time. Coordinated motions by a converter formed by DNA-disengaged RuvB subunits stimulates ATP hydrolysis and nucleotide exchange. Immobilization of the converter enables RuvB to convert the ATP-contained energy into a lever motion, pulling 2 nucleotides of DNA out of the RuvA tetramer per ATP hydrolyzed, thus driving DNA branch migration. The RuvB motors rotate together with the DNA substrate, which together with the progressing nucleotide cycle form the mechanistic basis for DNA recombination by continuous HJ branch migration. Branch migration allows RuvC to scan DNA until it finds its consensus sequence, where it cleaves and resolves cruciform DNA. In Thioalkalivibrio sulfidiphilus (strain HL-EbGR7), this protein is Holliday junction branch migration complex subunit RuvB.